The sequence spans 299 residues: Acetaldehyde dehydrogenase (299 aa).

11–14 (SGNI) serves as a coordination point for NAD(+). The active-site Acyl-thioester intermediate is the C126. Residues 157-165 (SAGPGTRAN) and N267 each bind NAD(+).

It belongs to the acetaldehyde dehydrogenase family.

The enzyme catalyses acetaldehyde + NAD(+) + CoA = acetyl-CoA + NADH + H(+). The chain is Acetaldehyde dehydrogenase from Bacillus thuringiensis (strain Al Hakam).